Reading from the N-terminus, the 364-residue chain is MSKERNNLLIAASGTGGHIFPALAVSKEVEKYWNMHWLGVEKRLDSKFVPRKYNLLTLNLETPQKSIFILFQYLKILYSTFNIIKILKEKKINLVFTTGGFISAPTILAAKLLNIPVIIHESNLIPGTVTKYFGFLCEFVLIGFKDTNAYLKNCKTIFTGTPLRPEFYKTNPLPEWVPRGKGPLLIVMGGSQGAKRINEIFYESLDLLIKQNFRIVHIVGEHNINIPRKIKSNNYVQKKFTNQIASLMQNCDLVISRSGAGTINELIQTKKPSILVPYPNSKNNHQEKNAIILSSIGGAILINQDKISKVFFQETLKRIFKVKKNKGKPTYEILDLMKENMKNLTSLKSTNKIKNLINYFLKEF.

Residues 15–17, asparagine 123, arginine 164, serine 191, and glutamine 286 each bind UDP-N-acetyl-alpha-D-glucosamine; that span reads TGG.

The protein belongs to the glycosyltransferase 28 family. MurG subfamily.

It localises to the cell inner membrane. It catalyses the reaction di-trans,octa-cis-undecaprenyl diphospho-N-acetyl-alpha-D-muramoyl-L-alanyl-D-glutamyl-meso-2,6-diaminopimeloyl-D-alanyl-D-alanine + UDP-N-acetyl-alpha-D-glucosamine = di-trans,octa-cis-undecaprenyl diphospho-[N-acetyl-alpha-D-glucosaminyl-(1-&gt;4)]-N-acetyl-alpha-D-muramoyl-L-alanyl-D-glutamyl-meso-2,6-diaminopimeloyl-D-alanyl-D-alanine + UDP + H(+). It participates in cell wall biogenesis; peptidoglycan biosynthesis. Its function is as follows. Cell wall formation. Catalyzes the transfer of a GlcNAc subunit on undecaprenyl-pyrophosphoryl-MurNAc-pentapeptide (lipid intermediate I) to form undecaprenyl-pyrophosphoryl-MurNAc-(pentapeptide)GlcNAc (lipid intermediate II). This is UDP-N-acetylglucosamine--N-acetylmuramyl-(pentapeptide) pyrophosphoryl-undecaprenol N-acetylglucosamine transferase from Prochlorococcus marinus (strain MIT 9515).